The sequence spans 453 residues: Bifunctional protein GlmU (453 aa).

Residues 1–225 (MHAHVILAAG…AEEALGVNTR (225 aa)) form a pyrophosphorylase region. Residues 7 to 10 (LAAG), lysine 21, glutamine 72, and 77 to 78 (GT) each bind UDP-N-acetyl-alpha-D-glucosamine. Position 102 (aspartate 102) interacts with Mg(2+). UDP-N-acetyl-alpha-D-glucosamine is bound by residues glycine 138, glutamate 152, asparagine 167, and asparagine 223. Asparagine 223 is a Mg(2+) binding site. A linker region spans residues 226-246 (EELARVEGVLLRRLRAEWMGK). The interval 247-453 (GVRMILPETI…GYALRKLGEG (207 aa)) is N-acetyltransferase. 2 residues coordinate UDP-N-acetyl-alpha-D-glucosamine: arginine 329 and lysine 347. Histidine 359 (proton acceptor) is an active-site residue. UDP-N-acetyl-alpha-D-glucosamine contacts are provided by tyrosine 362 and asparagine 373. Residues alanine 376, 382-383 (NY), serine 401, alanine 419, and arginine 436 contribute to the acetyl-CoA site.

The protein in the N-terminal section; belongs to the N-acetylglucosamine-1-phosphate uridyltransferase family. In the C-terminal section; belongs to the transferase hexapeptide repeat family. As to quaternary structure, homotrimer. Mg(2+) is required as a cofactor.

It is found in the cytoplasm. The enzyme catalyses alpha-D-glucosamine 1-phosphate + acetyl-CoA = N-acetyl-alpha-D-glucosamine 1-phosphate + CoA + H(+). It catalyses the reaction N-acetyl-alpha-D-glucosamine 1-phosphate + UTP + H(+) = UDP-N-acetyl-alpha-D-glucosamine + diphosphate. The protein operates within nucleotide-sugar biosynthesis; UDP-N-acetyl-alpha-D-glucosamine biosynthesis; N-acetyl-alpha-D-glucosamine 1-phosphate from alpha-D-glucosamine 6-phosphate (route II): step 2/2. It participates in nucleotide-sugar biosynthesis; UDP-N-acetyl-alpha-D-glucosamine biosynthesis; UDP-N-acetyl-alpha-D-glucosamine from N-acetyl-alpha-D-glucosamine 1-phosphate: step 1/1. It functions in the pathway bacterial outer membrane biogenesis; LPS lipid A biosynthesis. Catalyzes the last two sequential reactions in the de novo biosynthetic pathway for UDP-N-acetylglucosamine (UDP-GlcNAc). The C-terminal domain catalyzes the transfer of acetyl group from acetyl coenzyme A to glucosamine-1-phosphate (GlcN-1-P) to produce N-acetylglucosamine-1-phosphate (GlcNAc-1-P), which is converted into UDP-GlcNAc by the transfer of uridine 5-monophosphate (from uridine 5-triphosphate), a reaction catalyzed by the N-terminal domain. This Thermus thermophilus (strain ATCC BAA-163 / DSM 7039 / HB27) protein is Bifunctional protein GlmU.